The sequence spans 311 residues: Malate dehydrogenase (311 aa).

Residues 7–13 (GAAGGIG) and Asp34 contribute to the NAD(+) site. Substrate contacts are provided by Arg81 and Arg87. NAD(+)-binding positions include Asn94 and 117-119 (ITN). Residues Asn119 and Arg153 each coordinate substrate. Catalysis depends on His177, which acts as the Proton acceptor. Met227 is a binding site for NAD(+).

It belongs to the LDH/MDH superfamily. MDH type 1 family. Homodimer.

The enzyme catalyses (S)-malate + NAD(+) = oxaloacetate + NADH + H(+). Catalyzes the reversible oxidation of malate to oxaloacetate. This chain is Malate dehydrogenase, found in Vibrio parahaemolyticus serotype O3:K6 (strain RIMD 2210633).